Reading from the N-terminus, the 239-residue chain is Protein Thf1 (239 aa).

A coiled-coil region spans residues 183–221 (ERVRKDLELYRSSLDRMKQARAVVEEMVKAARRQQERRQ). Over residues 211 to 221 (KAARRQQERRQ) the composition is skewed to basic and acidic residues. The interval 211–239 (KAARRQQERRQSAASLPETSLGDPSKPGS) is disordered.

This sequence belongs to the THF1 family.

Functionally, may be involved in photosynthetic membrane biogenesis. The polypeptide is Protein Thf1 (Synechococcus sp. (strain JA-2-3B'a(2-13)) (Cyanobacteria bacterium Yellowstone B-Prime)).